A 393-amino-acid chain; its full sequence is Phospholipase A1-II 1 (393 aa).

Residues 200-220 (QVLNEIKRLQDMYEHEETSIT) are a coiled coil. Ser-225 acts as the Acyl-ester intermediate in catalysis. Catalysis depends on charge relay system residues Ser-225, Asp-284, and His-321.

Belongs to the AB hydrolase superfamily. Lipase family.

Its subcellular location is the cytoplasm. Functionally, acylhydrolase that catalyzes the hydrolysis of phospholipids at the sn-1 position. The chain is Phospholipase A1-II 1 from Oryza sativa subsp. indica (Rice).